Here is a 155-residue protein sequence, read N- to C-terminus: Ribosome maturation factor RimP (155 aa).

The protein belongs to the RimP family.

It is found in the cytoplasm. In terms of biological role, required for maturation of 30S ribosomal subunits. The sequence is that of Ribosome maturation factor RimP from Parasynechococcus marenigrum (strain WH8102).